The primary structure comprises 619 residues: Phosphomethylpyrimidine synthase (619 aa).

The span at 93 to 104 shows a compositional bias: basic and acidic residues; it reads IKPEDNGLKGPD. The segment at 93–114 is disordered; that stretch reads IKPEDNGLKGPDRSGGVTPFPN. Substrate contacts are provided by residues Asn217, Met246, Tyr275, His311, 331-333, 372-375, and Glu411; these read SRG and DGLR. His415 is a binding site for Zn(2+). Position 438 (Tyr438) interacts with substrate. His479 contributes to the Zn(2+) binding site. Residues Cys559, Cys562, and Cys567 each contribute to the [4Fe-4S] cluster site.

Belongs to the ThiC family. As to quaternary structure, homodimer. Requires [4Fe-4S] cluster as cofactor.

It carries out the reaction 5-amino-1-(5-phospho-beta-D-ribosyl)imidazole + S-adenosyl-L-methionine = 4-amino-2-methyl-5-(phosphooxymethyl)pyrimidine + CO + 5'-deoxyadenosine + formate + L-methionine + 3 H(+). It functions in the pathway cofactor biosynthesis; thiamine diphosphate biosynthesis. In terms of biological role, catalyzes the synthesis of the hydroxymethylpyrimidine phosphate (HMP-P) moiety of thiamine from aminoimidazole ribotide (AIR) in a radical S-adenosyl-L-methionine (SAM)-dependent reaction. This Rhizorhabdus wittichii (strain DSM 6014 / CCUG 31198 / JCM 15750 / NBRC 105917 / EY 4224 / RW1) (Sphingomonas wittichii) protein is Phosphomethylpyrimidine synthase.